The chain runs to 483 residues: Acetyltransferase AOL_s00215g273 (483 aa).

The next 8 helical transmembrane spans lie at 9–29 (ALIG…TSFV), 33–53 (IYPL…TEGL), 141–161 (VAYI…LYTC), 191–211 (IFQM…SVLV), 292–312 (FLVF…VYYG), 334–354 (VTGY…FICW), 372–392 (WFVG…VLWI), and 453–473 (LGGY…GSGF).

The protein belongs to the wax synthase family.

The protein resides in the membrane. It participates in secondary metabolite biosynthesis; terpenoid biosynthesis. Functionally, acetyltransferase; part of the gene cluster that mediates the biosynthesis of sesquiterpenyl epoxy-cyclohexenoids (SECs) such as anthrobotrisins and arthrosporols, metabolites that possess a novel hybrid carbon skeleton consisting of a polyketide-derived epoxycyclohexenol combined with a terpenoid-derived monocyclic sesquiterpenol substructure (PKS-PTS hybrid). The SEC pathway plays an important role for fungal soil colonization via decreasing fungal nematode-capturing ability. The role of the acetyltransferase in SEC biosynthesis has still to be determined. The pathway begins with the biosynthesis of 6-methylsalicylic acid (6-MSA), the first precursor of the polyketide-derived epoxycyclohexenol in arthrosporols, by the polyketide synthase (PKS) AOL_s00215g283 via condensation of 1 acetate and 3 malonate units. The 6-methylsalicylic acid decarboxylase AOL_s00215g281 then catalyzes the decarboxylation of 6-methylsalicylic acid to yield m-cresol. The cytochrome P450 monooxygenase AOL_s00215g282 further oxidizes m-cresol to yield toluquinol. With the assistance of the oxidoreductase AOL_s00215g277, the polyprenyl transferase AOL_s00215g276 catalyzes the farnesylation of toluquinol to produce farnesyl hydroquinone, the hybrid precursor for biosynthesis of SECs. Farnesyl hydroquinone undergoes epoxidation and then subsequent dehydrogenation to form farnesyl epoxy-quinone, the first and simplest SEC. The cytochrome P450 monooxygenase AOL_s00215g278 and the FAD-dependent monooxygenase AOL_s00215g279 might be involved in the oxygenation of the phenol moiety, most likely in the epoxy formation. The cytochrome P450 monooxygenases AOL_s00215g274 and AOL_s00215g280 are involved in specific regional ketone reductions at respectively C-4 and C-1 of farnesyl epoxy-quinone PubMed:33823587. The protein is Acetyltransferase AOL_s00215g273 of Arthrobotrys oligospora (strain ATCC 24927 / CBS 115.81 / DSM 1491) (Nematode-trapping fungus).